The chain runs to 73 residues: SAGLLTQEWSAVEDLLAQMSLPEADAQRDAEMVSTATGGGRMNQESIEPPNNLPPRERKAGCKNFYWKGFTSC.

A propeptide spanning residues 1-45 (SAGLLTQEWSAVEDLLAQMSLPEADAQRDAEMVSTATGGGRMNQE) is cleaved from the precursor. A disordered region spans residues 23-58 (EADAQRDAEMVSTATGGGRMNQESIEPPNNLPPRER). Cysteine 62 and cysteine 73 are disulfide-bonded.

The protein belongs to the somatostatin family.

The protein resides in the secreted. Functionally, somatostatin inhibits the release of somatotropin. The sequence is that of Somatostatin-2 (sst2) from Platichthys flesus (European flounder).